Here is a 175-residue protein sequence, read N- to C-terminus: Receptor activity-modifying protein 2 (175 aa).

The N-terminal stretch at 1 to 42 (MASLRVERAGGPRLPRTRVGRPAALRLLLLLGAVLNPHEALA) is a signal peptide. Residues 43 to 143 (QPLPTTGTPG…VQPTFSDPPE (101 aa)) are Extracellular-facing. 2 cysteine pairs are disulfide-bonded: cysteine 68–cysteine 99 and cysteine 84–cysteine 131. Asparagine 130 is a glycosylation site (N-linked (GlcNAc...) asparagine). A helical membrane pass occupies residues 144-165 (DVLLAMIIAPICLIPFLITLVV). Residues 166–175 (WRSKDSEAQA) are Cytoplasmic-facing.

It belongs to the RAMP family. Heterodimer of CALCRL and RAMP2; the interaction forms the receptor complex for adrenomedullin/ADM. Heterodimer of CALCR and RAMP2; interaction forms the AMYR2 receptor complex for calcitonin/CALC and amylin/IAPP. In terms of tissue distribution, strongly expressed in lung, breast, immune system and fetal tissues.

The protein localises to the cell membrane. Functionally, accessory protein that interacts with and modulates the function of G-protein coupled receptors including calcitonin gene-related peptide type 1 receptor (CALCRL) and calcitonin receptor (CALCR). Required for the transport of CALCRL to the plasma membrane. Together with CALCRL, form a receptor complex for adrenomedullin/ADM. Together with CALCR, act as a receptor complex for calcitonin/CT/CALC. Together with CALCR, also act as a receptor complex for amylin/IAPP. This Homo sapiens (Human) protein is Receptor activity-modifying protein 2.